The primary structure comprises 415 residues: Heterogeneous nuclear ribonucleoprotein F (415 aa).

Methionine 1 is subject to N-acetylmethionine. Methionine 2 carries the post-translational modification N-acetylmethionine; in Heterogeneous nuclear ribonucleoprotein F, N-terminally processed. The RRM 1 domain maps to 11 to 90 (YVVKLRGLPW…RYIEVFKSHR (80 aa)). A Glycyl lysine isopeptide (Lys-Gly) (interchain with G-Cter in SUMO) cross-link involves residue lysine 72. Positions 81–86 (RYIEVF) are interaction with RNA. Lysine 87 is covalently cross-linked (Glycyl lysine isopeptide (Lys-Gly) (interchain with G-Cter in SUMO2)). Residues serine 104, serine 107, and serine 161 each carry the phosphoserine modification. Residues 111–188 (GFVRLRGLPF…RYIEVFKSSQ (78 aa)) enclose the RRM 2 domain. Lysine 167 is covalently cross-linked (Glycyl lysine isopeptide (Lys-Gly) (interchain with G-Cter in SUMO2)). The tract at residues 179 to 184 (RYIEVF) is interaction with RNA. Residue lysine 185 forms a Glycyl lysine isopeptide (Lys-Gly) (interchain with G-Cter in SUMO2) linkage. Serine 187, serine 193, and serine 195 each carry phosphoserine. An N6-acetyllysine; alternate modification is found at lysine 200. Lysine 200 participates in a covalent cross-link: Glycyl lysine isopeptide (Lys-Gly) (interchain with G-Cter in SUMO2); alternate. Position 215 is a phosphothreonine (threonine 215). Lysine 224 bears the N6-acetyllysine; alternate mark. Lysine 224 participates in a covalent cross-link: Glycyl lysine isopeptide (Lys-Gly) (interchain with G-Cter in SUMO2); alternate. Position 265 is a phosphoserine (serine 265). In terms of domain architecture, RRM 3 spans 289–366 (HCVHMRGLPY…IELFLNSTTG (78 aa)). The segment at 355–360 (RYIELF) is interaction with RNA.

Identified in the spliceosome C complex. Interacts with AGO1, AGO2, TBP and TXNL4/DIM1. Sumoylated.

The protein resides in the nucleus. It localises to the nucleoplasm. Its function is as follows. Component of the heterogeneous nuclear ribonucleoprotein (hnRNP) complexes which provide the substrate for the processing events that pre-mRNAs undergo before becoming functional, translatable mRNAs in the cytoplasm. Plays a role in the regulation of alternative splicing events. Binds G-rich sequences in pre-mRNAs and keeps target RNA in an unfolded state. This is Heterogeneous nuclear ribonucleoprotein F (Hnrnpf) from Mus musculus (Mouse).